The following is a 221-amino-acid chain: uncharacterized protein (221 aa).

Residues 1–16 are compositionally biased toward basic and acidic residues; it reads MESSRWDKDPPGERRP. Residues 1–64 are disordered; the sequence is MESSRWDKDP…SHTPQTNTRR (64 aa).

This is an uncharacterized protein from Homo sapiens (Human).